A 147-amino-acid polypeptide reads, in one-letter code: Small ribosomal subunit protein uS12 (147 aa).

Belongs to the universal ribosomal protein uS12 family. In terms of assembly, part of the 30S ribosomal subunit.

Its function is as follows. With S4 and S5 plays an important role in translational accuracy. Located at the interface of the 30S and 50S subunits. The protein is Small ribosomal subunit protein uS12 of Saccharolobus solfataricus (strain ATCC 35092 / DSM 1617 / JCM 11322 / P2) (Sulfolobus solfataricus).